The primary structure comprises 80 residues: Metallothionein-like protein type 2 MET1 (80 aa).

The protein belongs to the metallothionein superfamily. Type 15 family.

In terms of biological role, metallothioneins have a high content of cysteine residues that bind various heavy metals. This Fragaria ananassa (Strawberry) protein is Metallothionein-like protein type 2 MET1 (MET1).